Consider the following 356-residue polypeptide: Holliday junction branch migration complex subunit RuvB (356 aa).

The large ATPase domain (RuvB-L) stretch occupies residues 4–191 (TDKLATEQRI…FGIVARLEFY (188 aa)). ATP contacts are provided by residues Leu-30, Arg-31, Gly-72, Lys-75, Thr-76, Thr-77, 138-140 (EDY), Arg-181, Tyr-191, and Arg-228. Thr-76 contacts Mg(2+). Positions 192-262 (DADQLSRIVR…VADAALAMLD (71 aa)) are small ATPAse domain (RuvB-S). The segment at 265–356 (PVGFDLMDRK…RDEWDTPDGK (92 aa)) is head domain (RuvB-H). DNA is bound by residues Arg-301, Arg-320, and Arg-325.

This sequence belongs to the RuvB family. As to quaternary structure, homohexamer. Forms an RuvA(8)-RuvB(12)-Holliday junction (HJ) complex. HJ DNA is sandwiched between 2 RuvA tetramers; dsDNA enters through RuvA and exits via RuvB. An RuvB hexamer assembles on each DNA strand where it exits the tetramer. Each RuvB hexamer is contacted by two RuvA subunits (via domain III) on 2 adjacent RuvB subunits; this complex drives branch migration. In the full resolvosome a probable DNA-RuvA(4)-RuvB(12)-RuvC(2) complex forms which resolves the HJ.

It localises to the cytoplasm. The enzyme catalyses ATP + H2O = ADP + phosphate + H(+). In terms of biological role, the RuvA-RuvB-RuvC complex processes Holliday junction (HJ) DNA during genetic recombination and DNA repair, while the RuvA-RuvB complex plays an important role in the rescue of blocked DNA replication forks via replication fork reversal (RFR). RuvA specifically binds to HJ cruciform DNA, conferring on it an open structure. The RuvB hexamer acts as an ATP-dependent pump, pulling dsDNA into and through the RuvAB complex. RuvB forms 2 homohexamers on either side of HJ DNA bound by 1 or 2 RuvA tetramers; 4 subunits per hexamer contact DNA at a time. Coordinated motions by a converter formed by DNA-disengaged RuvB subunits stimulates ATP hydrolysis and nucleotide exchange. Immobilization of the converter enables RuvB to convert the ATP-contained energy into a lever motion, pulling 2 nucleotides of DNA out of the RuvA tetramer per ATP hydrolyzed, thus driving DNA branch migration. The RuvB motors rotate together with the DNA substrate, which together with the progressing nucleotide cycle form the mechanistic basis for DNA recombination by continuous HJ branch migration. Branch migration allows RuvC to scan DNA until it finds its consensus sequence, where it cleaves and resolves cruciform DNA. The sequence is that of Holliday junction branch migration complex subunit RuvB from Burkholderia cenocepacia (strain ATCC BAA-245 / DSM 16553 / LMG 16656 / NCTC 13227 / J2315 / CF5610) (Burkholderia cepacia (strain J2315)).